The chain runs to 350 residues: Anthranilate phosphoribosyltransferase (350 aa).

5-phospho-alpha-D-ribose 1-diphosphate-binding positions include Gly-94, 97-98 (GD), Thr-102, 104-107 (NIST), 122-130 (KHGNRSVSS), and Ser-134. Gly-94 contacts anthranilate. Ser-106 serves as a coordination point for Mg(2+). Asn-125 contributes to the anthranilate binding site. Anthranilate is bound at residue Arg-180. Residues Asp-239 and Glu-240 each contribute to the Mg(2+) site.

This sequence belongs to the anthranilate phosphoribosyltransferase family. As to quaternary structure, homodimer. Mg(2+) serves as cofactor.

It carries out the reaction N-(5-phospho-beta-D-ribosyl)anthranilate + diphosphate = 5-phospho-alpha-D-ribose 1-diphosphate + anthranilate. The protein operates within amino-acid biosynthesis; L-tryptophan biosynthesis; L-tryptophan from chorismate: step 2/5. In terms of biological role, catalyzes the transfer of the phosphoribosyl group of 5-phosphorylribose-1-pyrophosphate (PRPP) to anthranilate to yield N-(5'-phosphoribosyl)-anthranilate (PRA). This chain is Anthranilate phosphoribosyltransferase, found in Geotalea daltonii (strain DSM 22248 / JCM 15807 / FRC-32) (Geobacter daltonii).